Here is a 459-residue protein sequence, read N- to C-terminus: UDP-N-acetylmuramoyl-tripeptide--D-alanyl-D-alanine ligase (459 aa).

121 to 127 is a binding site for ATP; it reads GSSGKTT.

Belongs to the MurCDEF family. MurF subfamily.

It localises to the cytoplasm. It carries out the reaction D-alanyl-D-alanine + UDP-N-acetyl-alpha-D-muramoyl-L-alanyl-gamma-D-glutamyl-meso-2,6-diaminopimelate + ATP = UDP-N-acetyl-alpha-D-muramoyl-L-alanyl-gamma-D-glutamyl-meso-2,6-diaminopimeloyl-D-alanyl-D-alanine + ADP + phosphate + H(+). It functions in the pathway cell wall biogenesis; peptidoglycan biosynthesis. Involved in cell wall formation. Catalyzes the final step in the synthesis of UDP-N-acetylmuramoyl-pentapeptide, the precursor of murein. The sequence is that of UDP-N-acetylmuramoyl-tripeptide--D-alanyl-D-alanine ligase from Treponema pallidum (strain Nichols).